A 225-amino-acid polypeptide reads, in one-letter code: Nucleolar protein 6 (225 aa).

Residues 1–75 (MGSEEDKKLT…GGKGKNGKKG (75 aa)) form a disordered region. The span at 9-20 (LTKKQLKAQQFR) shows a compositional bias: basic residues. Positions 21–42 (KSKEEKDQEKDVKKEQAPEGKR) are enriched in basic and acidic residues. Position 45 is a phosphoserine (serine 45). The span at 56 to 75 (KKKRKTRRGRGGKGKNGKKG) shows a compositional bias: basic residues. One can recognise an RRM domain in the interval 78 to 155 (FIVFVGSLPR…KKINVELTVG (78 aa)). At serine 160 the chain carries Phosphoserine. The disordered stretch occupies residues 187 to 225 (NDGNQKKIAKTTATAAQTSGTDNKPVPAGIHPDRAKLLK).

This sequence belongs to the RRM NOP6 family.

It localises to the nucleus. Its subcellular location is the nucleolus. Its function is as follows. Predicted to be involved in rRNA processing. The chain is Nucleolar protein 6 (NOP6) from Saccharomyces cerevisiae (strain ATCC 204508 / S288c) (Baker's yeast).